A 140-amino-acid chain; its full sequence is Small ribosomal subunit protein uS8c (140 aa).

Belongs to the universal ribosomal protein uS8 family. Part of the 30S ribosomal subunit.

It localises to the plastid. Its subcellular location is the chloroplast. One of the primary rRNA binding proteins, it binds directly to 16S rRNA central domain where it helps coordinate assembly of the platform of the 30S subunit. The polypeptide is Small ribosomal subunit protein uS8c (rps8) (Euglena gracilis).